A 284-amino-acid chain; its full sequence is Tropomyosin-1 (284 aa).

Disordered stretches follow at residues Met1–Glu26 and Glu96–Asn124. The stretch at Met1–Ser276 forms a coiled coil. The segment covering Lys12–Glu26 has biased composition (basic and acidic residues). Over residues Gly107–Asp121 the composition is skewed to polar residues.

This sequence belongs to the tropomyosin family. Homodimer.

In terms of biological role, tropomyosin, in association with the troponin complex, plays a central role in the calcium dependent regulation of muscle contraction. The sequence is that of Tropomyosin-1 from Bombyx mori (Silk moth).